The primary structure comprises 612 residues: FAD-linked oxidoreductase notD' (612 aa).

Residues 1 to 19 (MRDIRELLLVLFTSCLALG) form the signal peptide. N50, N86, and N109 each carry an N-linked (GlcNAc...) asparagine glycan. The FAD-binding PCMH-type domain occupies 124 to 307 (GQGRIPRYSA…TSITMPVFGA (184 aa)). N-linked (GlcNAc...) asparagine glycosylation is found at N311 and N396.

This sequence belongs to the oxygen-dependent FAD-linked oxidoreductase family. Requires FAD as cofactor.

The protein operates within alkaloid biosynthesis. FAD-linked oxidoreductase; part of the gene cluster that mediates the biosynthesis of notoamide, a fungal indole alkaloid that belongs to a family of natural products containing a characteristic bicyclo[2.2.2]diazaoctane core. The first step of notoamide biosynthesis involves coupling of L-proline and L-tryptophan by the bimodular NRPS notE', to produce cyclo-L-tryptophan-L-proline called brevianamide F. The reverse prenyltransferase notF' then acts as a deoxybrevianamide E synthase and converts brevianamide F to deoxybrevianamide E via reverse prenylation at C-2 of the indole ring leading to the bicyclo[2.2.2]diazaoctane core. Deoxybrevianamide E is further hydroxylated at C-6 of the indole ring, likely catalyzed by the cytochrome P450 monooxygenase notG', to yield 6-hydroxy-deoxybrevianamide E. 6-hydroxy-deoxybrevianamide E is a specific substrate of the prenyltransferase notC' for normal prenylation at C-7 to produce 6-hydroxy-7-prenyl-deoxybrevianamide, also called notoamide S. As the proposed pivotal branching point in notoamide biosynthesis, notoamide S can be diverted to notoamide E through an oxidative pyran ring closure putatively catalyzed by either notH' cytochrome P450 monooxygenase or the notD' FAD-linked oxidoreductase. This step would be followed by an indole 2,3-epoxidation-initiated pinacol-like rearrangement catalyzed by the notB' FAD-dependent monooxygenase leading to the formation of notoamide C and notoamide D. On the other hand notoamide S is converted to notoamide T by notH' (or notD'), a bifunctional oxidase that also functions as the intramolecular Diels-Alderase responsible for generation of (-)-notoamide T. To generate antipodal (+)-notoaminide T, notH (or notD) in Aspergillus strain MF297-2 is expected to catalyze a Diels-Alder reaction leading to the opposite stereochemistry. The remaining oxidoreductase notD' (or notH') likely catalyzes the oxidative pyran ring formation to yield (-)-stephacidin A. The FAD-dependent monooxygenase notI' is highly similar to notB' and is predicted to catalyze a similar conversion from (-)-stephacidin A to (+)-notoamide B via the 2,3-epoxidation of (-)-stephacidin A followed by a pinacol-type rearrangement. Finally, it remains unclear which enzyme could be responsible for the final hydroxylation steps leading to notoamide A and sclerotiamide. The sequence is that of FAD-linked oxidoreductase notD' from Aspergillus versicolor.